A 169-amino-acid chain; its full sequence is Putative tRNA (cytidine(34)-2'-O)-methyltransferase (169 aa).

S-adenosyl-L-methionine-binding residues include V79, G104, I125, and S134.

This sequence belongs to the class IV-like SAM-binding methyltransferase superfamily. RNA methyltransferase TrmH family. TrmL subfamily.

Its subcellular location is the cytoplasm. It carries out the reaction cytidine(34) in tRNA + S-adenosyl-L-methionine = 2'-O-methylcytidine(34) in tRNA + S-adenosyl-L-homocysteine + H(+). It catalyses the reaction 5-carboxymethylaminomethyluridine(34) in tRNA(Leu) + S-adenosyl-L-methionine = 5-carboxymethylaminomethyl-2'-O-methyluridine(34) in tRNA(Leu) + S-adenosyl-L-homocysteine + H(+). Functionally, could methylate the ribose at the nucleotide 34 wobble position in tRNA. This Lactococcus lactis subsp. cremoris (strain MG1363) protein is Putative tRNA (cytidine(34)-2'-O)-methyltransferase.